The chain runs to 101 residues: MQRLCVYVLIFALALAAFSEASWKPRSQQPDAPLGTGANRDLELPWLEQQGPASHHRRQLGPQGPPHLVADPSKKQGPWLEEEEEAYGWMDFGRRSAEDEN.

The N-terminal stretch at 1–21 (MQRLCVYVLIFALALAAFSEA) is a signal peptide. The segment at 22–82 (SWKPRSQQPD…SKKQGPWLEE (61 aa)) is disordered. Glutamine 59 is subject to Pyrrolidone carboxylic acid; in form big gastrin. A Pyrrolidone carboxylic acid; in form gastrin modification is found at glutamine 76. Tyrosine 87 carries the post-translational modification Sulfotyrosine; partial. A Phenylalanine amide modification is found at phenylalanine 92. Serine 96 carries the post-translational modification Phosphoserine. Residues 96 to 101 (SAEDEN) constitute a propeptide, removed in mature form.

The protein belongs to the gastrin/cholecystokinin family. In terms of processing, two different processing pathways probably exist in antral G-cells. In the dominant pathway progastrin is cleaved at three sites resulting in two major bioactive gastrins, gastrin-34 and gastrin-17. In the putative alternative pathway, progastrin may be processed only at the most C-terminal dibasic site resulting in the synthesis of gastrin-71. Post-translationally, sulfation enhances proteolytic processing, and blocks peptide degradation. Levels of sulfation differ between proteolytically-cleaved gastrins. Thus, gastrin-6 is almost 73% sulfated, whereas the larger gastrins are less than 50% sulfated. Sulfation levels are also tissue-specific.

The protein localises to the secreted. Gastrin stimulates the stomach mucosa to produce and secrete hydrochloric acid and the pancreas to secrete its digestive enzymes. It also stimulates smooth muscle contraction and increases blood circulation and water secretion in the stomach and intestine. The polypeptide is Gastrin (GAST) (Homo sapiens (Human)).